A 406-amino-acid polypeptide reads, in one-letter code: E3 ubiquitin-protein ligase RING1 (406 aa).

Phosphothreonine is present on threonine 24. The segment at 30-234 is necessary for transcriptional repression; the sequence is MDGTEIAVSP…GGAGSEDSGD (205 aa). Phosphoserine is present on serine 38. An RING-type zinc finger spans residues 48–88; sequence CPICLDMLKNTMTTKECLHRFCSDCIVTALRSGNKECPTCR. 3 positions are modified to phosphoserine: serine 140, serine 187, and serine 190. 2 disordered regions span residues 151–263 and 309–354; these read HRAQ…GEIE and QQQE…PSLE. Acidic residues predominate over residues 175–187; sequence EPGEGEGDGEDVS. The short motif at 201 to 204 is the Nuclear localization signal element; that stretch reads KRPR. Residues 214–228 are compositionally biased toward gly residues; the sequence is GTGGGAAGGACGGAG. At threonine 215 the chain carries Phosphothreonine. Phosphoserine occurs at positions 229 and 232. The necessary for interaction with CBX2 stretch occupies residues 230-406; sequence EDSGDRGGTL…LCYAPTKDPK (177 aa). The span at 235–244 shows a compositional bias: gly residues; sequence RGGTLGGGTL. The span at 246–258 shows a compositional bias: pro residues; that stretch reads PPSPPGAPSPPEP. 2 positions are modified to phosphoserine: serine 248 and serine 254. A compositionally biased stretch (gly residues) spans 317 to 343; it reads GGPGGGASDTGGPDGGGGERGVAGGGE.

In terms of assembly, component of chromatin-associated Polycomb (PcG) complexes. Part of the E2F6.com-1 complex in G0 phase composed of E2F6, MGA, MAX, TFDP1, CBX3, BAT8, EUHMTASE1, RING1, RNF2/RING2 MBLR, L3MBTL2 and YAF2. Interacts with CBX2 and PCGF6. Component of a PRC1-like complex. Component of repressive BCOR complex containing Polycomb group subcomplex at least composed of RYBP, PCGF1, BCOR and RNF2/RING2. Interacts with PHC2, PCGF2, RNF2; CBX6, CBX7 and CBX8. Interacts with BMI1. Interacts with MN1. Interacts with USP26.

The protein localises to the nucleus speckle. It carries out the reaction S-ubiquitinyl-[E2 ubiquitin-conjugating enzyme]-L-cysteine + [acceptor protein]-L-lysine = [E2 ubiquitin-conjugating enzyme]-L-cysteine + N(6)-ubiquitinyl-[acceptor protein]-L-lysine.. Its pathway is protein modification; protein ubiquitination. Constitutes one of the E3 ubiquitin-protein ligases that mediate monoubiquitination of 'Lys-119' of histone H2A, thereby playing a central role in histone code and gene regulation. H2A 'Lys-119' ubiquitination gives a specific tag for epigenetic transcriptional repression and participates in X chromosome inactivation of female mammals. Essential component of a Polycomb group (PcG) multiprotein PRC1-like complex, a complex class required to maintain the transcriptionally repressive state of many genes, including Hox genes, throughout development. PcG PRC1 complex acts via chromatin remodeling and modification of histones, rendering chromatin heritably changed in its expressibility. Compared to RNF2/RING2, it does not have the main E3 ubiquitin ligase activity on histone H2A, and it may rather act as a modulator of RNF2/RING2 activity. The polypeptide is E3 ubiquitin-protein ligase RING1 (Mus musculus (Mouse)).